The sequence spans 155 residues: Large ribosomal subunit protein eL19 (155 aa).

The span at 66–84 (VRHLQRRKGRRRGMGRRKG) shows a compositional bias: basic residues. Positions 66 to 85 (VRHLQRRKGRRRGMGRRKGV) are disordered.

This sequence belongs to the eukaryotic ribosomal protein eL19 family. In terms of assembly, part of the 50S ribosomal subunit.

Its function is as follows. Binds to the 23S rRNA. The sequence is that of Large ribosomal subunit protein eL19 from Aeropyrum pernix (strain ATCC 700893 / DSM 11879 / JCM 9820 / NBRC 100138 / K1).